The following is a 272-amino-acid chain: TLC domain-containing protein 4 C (272 aa).

Transmembrane regions (helical) follow at residues 16–36 (FSNS…FIIY), 71–91 (VSMI…VESF), 103–123 (SLLM…IICY), 128–148 (LVGT…IYVA), 155–175 (CFVP…PLNM), 196–216 (FVIT…IYLV), and 233–253 (VFIT…FLLI). The TLC domain occupies 61–261 (KKKLEWDQRV…LIKKLYQTYL (201 aa)).

The protein belongs to the TLCD4 family.

It is found in the membrane. The sequence is that of TLC domain-containing protein 4 C (tlcd4c) from Dictyostelium discoideum (Social amoeba).